A 1002-amino-acid polypeptide reads, in one-letter code: Copper-transporting ATPase HMA5 (1002 aa).

Low complexity predominate over residues 32–48; it reads RPRYPSMPRRPRSAAVA. Residues 32 to 63 are disordered; the sequence is RPRYPSMPRRPRSAAVAGEGGEGGGGGGDGDL. Gly residues predominate over residues 49–60; sequence GEGGEGGGGGGD. HMA domains lie at 75–141, 153–219, and 228–294; these read KVAV…FEAK, LVCR…FEAI, and SRID…SGDL. Residues Cys-86, Cys-89, Cys-164, and Cys-167 each contribute to the Cu(+) site. The next 8 helical transmembrane spans lie at 320–340, 354–374, 392–412, 425–445, 585–605, 624–644, 943–963, and 972–992; these read FLWS…FMYI, MMSI…FVIG, MDVL…YSIL, FFET…LEIL, VFVP…FLAG, LALQ…LGLA, YVWA…VLFP, and WVAG…SLLL.

The protein belongs to the cation transport ATPase (P-type) (TC 3.A.3) family. Type IB subfamily. In terms of tissue distribution, expressed in root pericycle cells, xylem region of diffuse vascular bundles in the first node, and vascular tissues of peduncle, rachis and husk.

Its subcellular location is the cell membrane. It catalyses the reaction Cu(+)(in) + ATP + H2O = Cu(+)(out) + ADP + phosphate + H(+). Copper (Cu) transporter that plays an essential role in promoting translocation of Cu from roots to shoots. Involved in loading Cu to the xylem of the roots and other organs, including panicles. This chain is Copper-transporting ATPase HMA5, found in Oryza sativa subsp. japonica (Rice).